Here is a 164-residue protein sequence, read N- to C-terminus: PTS system sorbose-specific EIIB component (164 aa).

Positions 1–164 (MQITLARIDD…DKINETAFCE (164 aa)) constitute a PTS EIIB type-4 domain. Residue His14 is the Pros-phosphohistidine intermediate of the active site. The residue at position 14 (His14) is a Phosphohistidine; by EIIA.

As to quaternary structure, dimer of dimers.

It localises to the cytoplasm. The enzyme catalyses keto-L-sorbose(out) + N(pros)-phospho-L-histidyl-[protein] = L-sorbose 1-phosphate(in) + L-histidyl-[protein]. Functionally, the phosphoenolpyruvate-dependent sugar phosphotransferase system (PTS), a major carbohydrate active transport system, catalyzes the phosphorylation of incoming sugar substrates concomitant with their translocation across the cell membrane. The enzyme II SorABFM PTS system is involved in L-sorbose transport. In Klebsiella pneumoniae, this protein is PTS system sorbose-specific EIIB component.